Here is a 1223-residue protein sequence, read N- to C-terminus: DNA-directed RNA polymerase II subunit RPB2 (1223 aa).

Positions 1–20 (MSADNEDYYDEDPYGFEEEN) are disordered. A Mg(2+)-binding site is contributed by Asp-836. The Zn(2+) site is built by Cys-1162, Cys-1165, Cys-1181, and Cys-1184. Residues 1162 to 1184 (CGICGLMSVIAKLNHNQFECKGC) form a C4-type zinc finger.

The protein belongs to the RNA polymerase beta chain family. In terms of assembly, component of the RNA polymerase II (Pol II) complex consisting of 12 subunits.

It is found in the nucleus. The catalysed reaction is RNA(n) + a ribonucleoside 5'-triphosphate = RNA(n+1) + diphosphate. Its function is as follows. DNA-dependent RNA polymerase catalyzes the transcription of DNA into RNA using the four ribonucleoside triphosphates as substrates. Second largest component of RNA polymerase II which synthesizes mRNA precursors and many functional non-coding RNAs. Proposed to contribute to the polymerase catalytic activity and forms the polymerase active center together with the largest subunit. Pol II is the central component of the basal RNA polymerase II transcription machinery. It is composed of mobile elements that move relative to each other. RPB2 is part of the core element with the central large cleft, the clamp element that moves to open and close the cleft and the jaws that are thought to grab the incoming DNA template. This Candida glabrata (strain ATCC 2001 / BCRC 20586 / JCM 3761 / NBRC 0622 / NRRL Y-65 / CBS 138) (Yeast) protein is DNA-directed RNA polymerase II subunit RPB2 (RPB2).